The chain runs to 574 residues: DNA mismatch repair protein MutL (574 aa).

It belongs to the DNA mismatch repair MutL/HexB family.

In terms of biological role, this protein is involved in the repair of mismatches in DNA. It is required for dam-dependent methyl-directed DNA mismatch repair. May act as a 'molecular matchmaker', a protein that promotes the formation of a stable complex between two or more DNA-binding proteins in an ATP-dependent manner without itself being part of a final effector complex. This Coxiella burnetii (strain Dugway 5J108-111) protein is DNA mismatch repair protein MutL.